The sequence spans 223 residues: Small ribosomal subunit protein uS3 (223 aa).

Residues 40 to 108 (IRELVHRELP…KVHLNIQEIR (69 aa)) enclose the KH type-2 domain.

Belongs to the universal ribosomal protein uS3 family. Part of the 30S ribosomal subunit. Forms a tight complex with proteins S10 and S14.

Its function is as follows. Binds the lower part of the 30S subunit head. Binds mRNA in the 70S ribosome, positioning it for translation. The sequence is that of Small ribosomal subunit protein uS3 from Thermomicrobium roseum (strain ATCC 27502 / DSM 5159 / P-2).